The chain runs to 280 residues: Merozoite surface protein 2 (280 aa).

A signal peptide spans 1–20 (MKVIKTLSIINFFIFVTFNI). N22 and N36 each carry an N-linked (GlcNAc...) asparagine glycan. Positions 44–206 (ANEGSNTKSV…PQTAENENPA (163 aa)) are polymorphic region. The disordered stretch occupies residues 47–242 (GSNTKSVGAN…SQKECTDGNK (196 aa)). Residues 51 to 74 (KSVGANAPKADTIASGSQSSTNSA) form a 5 X 12 AA tandem repeats of P-P-I-T-T-T-E-S-N-S-R-S region. A compositionally biased stretch (low complexity) spans 64–98 (ASGSQSSTNSASTSTTNNGESQTTTPTAADTPTAT). Polar residues predominate over residues 99–149 (ESNSRSPPITTTESNSRSPPITTTESNSRSPPITTTESNSRSPPITTTESN). Tandem repeats lie at residues 105–116 (PPITTTESNSRS), 117–128 (PPITTTESNSRS), 129–140 (PPITTTESNSRS), and 141–152 (PPITTTESNSRS). Residues 150-163 (SRSPPITTTESSSS) show a composition bias toward low complexity. The 5; partial repeat unit spans residues 153-160 (PPITTTES). A glycan (N-linked (GlcNAc...) asparagine) is linked at N168. A compositionally biased stretch (basic and acidic residues) spans 170-182 (TDGKGEESEKQNE). N184 and N229 each carry an N-linked (GlcNAc...) asparagine glycan. Residues 233–242 (SQKECTDGNK) are compositionally biased toward basic and acidic residues. Residues C237 and C245 are joined by a disulfide bond. N-linked (GlcNAc...) asparagine glycans are attached at residues N253 and N254. Residue N254 is the site of GPI-anchor amidated asparagine attachment. Positions 255-280 (SSNIASINKFVVLISATLVLSFAIFI) are cleaved as a propeptide — removed in mature form.

The protein resides in the cell membrane. May play a role in the merozoite attachment to the erythrocyte. This chain is Merozoite surface protein 2, found in Plasmodium falciparum (isolate K1 / Thailand).